The following is a 154-amino-acid chain: Nucleoside diphosphate kinase A1 (154 aa).

Positions 13, 61, 89, 95, 106, and 116 each coordinate ATP. Histidine 119 serves as the catalytic Pros-phosphohistidine intermediate.

It belongs to the NDK family. Mg(2+) serves as cofactor.

Its subcellular location is the cytoplasm. It catalyses the reaction a 2'-deoxyribonucleoside 5'-diphosphate + ATP = a 2'-deoxyribonucleoside 5'-triphosphate + ADP. The catalysed reaction is a ribonucleoside 5'-diphosphate + ATP = a ribonucleoside 5'-triphosphate + ADP. In terms of biological role, major role in the synthesis of nucleoside triphosphates other than ATP. The ATP gamma phosphate is transferred to the NDP beta phosphate via a ping-pong mechanism, using a phosphorylated active-site intermediate. This chain is Nucleoside diphosphate kinase A1, found in Xenopus laevis (African clawed frog).